The primary structure comprises 135 residues: Peptidyl-prolyl cis-trans isomerase FPR2 (135 aa).

The first 17 residues, 1 to 17 (MMFNIYLFVTFFSTILA), serve as a signal peptide directing secretion. The PPIase FKBP-type domain occupies 43–132 (GDKVKVHYTG…VFDVELVDVK (90 aa)).

Belongs to the FKBP-type PPIase family. FKBP2 subfamily.

Its subcellular location is the endoplasmic reticulum membrane. The catalysed reaction is [protein]-peptidylproline (omega=180) = [protein]-peptidylproline (omega=0). Inhibited by both FK506 and rapamycin. Binds FK506 with 15-fold lower affinity than FKB1. Its function is as follows. PPIases accelerate the folding of proteins. It catalyzes the cis-trans isomerization of proline imidic peptide bonds in oligopeptides. FKBP-13 may play a role in protein trafficking in the ER. This chain is Peptidyl-prolyl cis-trans isomerase FPR2 (FPR2), found in Saccharomyces cerevisiae (strain ATCC 204508 / S288c) (Baker's yeast).